We begin with the raw amino-acid sequence, 110 residues long: MAGWFELSKSSDNQFRFVLKAGNGETILTSELYTSKASAEKGIASVRSNSPQEERYEKKTASNGKFYFNLKAANHQIIGSSQMYATAQSRETGIASVKANGTSQTVKDNT.

2 tandem repeats follow at residues 10–58 and 61–109.

The protein belongs to the UPF0339 family. Duplicated subfamily.

This is UPF0339 protein YegP (yegP) from Shigella flexneri.